Reading from the N-terminus, the 574-residue chain is Isocitrate dehydrogenase kinase/phosphatase (574 aa).

ATP-binding positions include 315 to 321 (APGIRGM) and Lys336. Asp371 is an active-site residue.

It belongs to the AceK family.

Its subcellular location is the cytoplasm. It carries out the reaction L-seryl-[isocitrate dehydrogenase] + ATP = O-phospho-L-seryl-[isocitrate dehydrogenase] + ADP + H(+). In terms of biological role, bifunctional enzyme which can phosphorylate or dephosphorylate isocitrate dehydrogenase (IDH) on a specific serine residue. This is a regulatory mechanism which enables bacteria to bypass the Krebs cycle via the glyoxylate shunt in response to the source of carbon. When bacteria are grown on glucose, IDH is fully active and unphosphorylated, but when grown on acetate or ethanol, the activity of IDH declines drastically concomitant with its phosphorylation. The protein is Isocitrate dehydrogenase kinase/phosphatase of Escherichia coli (strain SMS-3-5 / SECEC).